Consider the following 207-residue polypeptide: Vascular endothelial growth factor B (207 aa).

An N-terminal signal peptide occupies residues 1–21 (MSPLLRRLLLVALLQLACTQA). 2 cysteine pairs are disulfide-bonded: C78–C122 and C82–C124. The disordered stretch occupies residues 140–182 (IPHHRPQPRSVLSWDSAPGASSPADIIHPTPAPGPSAHAAPSA).

Belongs to the PDGF/VEGF growth factor family. In terms of assembly, homodimer; disulfide-linked. Can also form heterodimer with VEGF.

Its subcellular location is the secreted. In terms of biological role, growth factor for endothelial cells. VEGF-B167 binds heparin and neuropilin-1 whereas the binding to neuropilin-1 of VEGF-B186 is regulated by proteolysis. The polypeptide is Vascular endothelial growth factor B (Vegfb) (Rattus norvegicus (Rat)).